Here is a 342-residue protein sequence, read N- to C-terminus: Cystein proteinase inhibitor protein salarin (342 aa).

Positions 1-19 are cleaved as a signal peptide; the sequence is MKSLVLLLLVAVTVSSVVS. Residue Asn-153 is glycosylated (N-linked (GlcNAc) asparagine). The O-linked (GlcNAc) threonine glycan is linked to Thr-184.

In terms of processing, N-glycosylated, with sialylated biantennary complex-type glycans. O-glycosylated, with sialylated oligosaccharides. In terms of tissue distribution, expressed in the skin, liver. intestine, spleen, pancreas and kidney.

It is found in the cytoplasm. The protein localises to the vacuole. Functionally, inhibits papain and ficin (cysteine proteinases) but not trypsin (a serine proteinase). The protein is Cystein proteinase inhibitor protein salarin (salarin) of Salmo salar (Atlantic salmon).